We begin with the raw amino-acid sequence, 338 residues long: Methionine synthase (338 aa).

Zn(2+) is bound by residues histidine 211, cysteine 213, and cysteine 294.

It belongs to the archaeal MetE family. The cofactor is Zn(2+).

The protein operates within amino-acid biosynthesis; L-methionine biosynthesis via de novo pathway. Catalyzes the transfer of a methyl group to L-homocysteine resulting in methionine formation. The physiological methyl donor is unknown. The polypeptide is Methionine synthase (Sulfurisphaera tokodaii (strain DSM 16993 / JCM 10545 / NBRC 100140 / 7) (Sulfolobus tokodaii)).